Reading from the N-terminus, the 178-residue chain is MAKKSTPVDSGRSKGKKASAPRGGGPAVIATNRKARHDYHILDTYECGVVLVGTEVKALREGKASLVDAYATIDAGEVWLRGLHIPEYSRGNFWNHTPRRVRKLLLHRREIDSLTGKVRDGNHTLVPLQLYFVDGRLKCELALARGKQDYDKRQDIKRRTEEREVVRELGRKIKGMKG.

A disordered region spans residues 1-28 (MAKKSTPVDSGRSKGKKASAPRGGGPAV).

The protein belongs to the SmpB family.

The protein localises to the cytoplasm. In terms of biological role, required for rescue of stalled ribosomes mediated by trans-translation. Binds to transfer-messenger RNA (tmRNA), required for stable association of tmRNA with ribosomes. tmRNA and SmpB together mimic tRNA shape, replacing the anticodon stem-loop with SmpB. tmRNA is encoded by the ssrA gene; the 2 termini fold to resemble tRNA(Ala) and it encodes a 'tag peptide', a short internal open reading frame. During trans-translation Ala-aminoacylated tmRNA acts like a tRNA, entering the A-site of stalled ribosomes, displacing the stalled mRNA. The ribosome then switches to translate the ORF on the tmRNA; the nascent peptide is terminated with the 'tag peptide' encoded by the tmRNA and targeted for degradation. The ribosome is freed to recommence translation, which seems to be the essential function of trans-translation. The chain is SsrA-binding protein from Corynebacterium urealyticum (strain ATCC 43042 / DSM 7109).